We begin with the raw amino-acid sequence, 30 residues long: Bowman-Birk type proteinase inhibitor 4 (30 aa).

2 cysteine pairs are disulfide-bonded: Cys-9-Cys-24 and Cys-14-Cys-22.

In terms of biological role, inhibits trypsin (IC(50)=17.60 nM) and, to a lesser extent, alpha-chymotrypsin (IC(50)=2.38 uM). The sequence is that of Bowman-Birk type proteinase inhibitor 4 from Lathyrus sativus (White vetchling).